The following is a 468-amino-acid chain: uncharacterized protein (468 aa).

A run of 6 helical transmembrane segments spans residues 59–79 (IPIV…ALFI), 135–155 (TWIN…LLLV), 215–235 (VFPF…LSIL), 297–317 (THCC…MVLV), 348–368 (HFIP…LVSY), and 385–405 (VFTV…IILF).

It is found in the membrane. This is an uncharacterized protein from Caenorhabditis elegans.